The primary structure comprises 1663 residues: Cortactin-binding protein 2 (1663 aa).

Disordered stretches follow at residues 1–23 (MATD…AGAA), 203–222 (KKKT…RSTE), 367–440 (GASV…LHPG), 454–478 (GNAN…SPTS), and 498–616 (RFTS…PKPS). Residues 119 to 276 (KKMQERMSAQ…EQLKRGSDSK (158 aa)) are a coiled coil. Low complexity predominate over residues 386–396 (PSTGSTPDPTS). Position 498 is an asymmetric dimethylarginine (arginine 498). Residues 583 to 593 (TVASTPSSLPQ) are compositionally biased toward polar residues. ANK repeat units lie at residues 709 to 739 (GRPT…DINY), 743 to 772 (DGHS…QVNA), 776 to 805 (NGFT…NINH), 809 to 838 (GGQT…NRSV), 842 to 871 (DGWT…PAHG), and 912 to 942 (EGWT…EPER). A disordered region spans residues 1449 to 1482 (KGESGAWRKVNTSPRRKSGRFSLPTWNKPDLSTE). At serine 1524 the chain carries Phosphoserine. The segment at 1581 to 1663 (QKEVSPLSSH…KNEHLEKPNK (83 aa)) is disordered. Residues 1582–1599 (KEVSPLSSHQTTECSNSK) are compositionally biased toward polar residues. Low complexity predominate over residues 1624 to 1638 (SQNTKRSSSSSNTRQ). Positions 1639-1648 (IEINNNSKEV) are enriched in polar residues. A compositionally biased stretch (basic and acidic residues) spans 1653–1663 (HKNEHLEKPNK).

As to quaternary structure, interacts with CTTN/cortactin SH3 domain. Interacts with STRN, STRN4/zinedin and MOB4/phocein; this interactions mediate the association with the STRIPAK core complex and may regulate dendritic spine distribution of the STRIPAK complex in hippocampal neurons. Activation of glutamate receptors weakens the interaction with STRN and STRN4. Highest expression in brain. Also expressed in kidney, pancreas, lung, heart, liver, skeletal muscle and placenta.

Its subcellular location is the cytoplasm. It localises to the cell cortex. The protein localises to the cell projection. It is found in the dendritic spine. Functionally, regulates the dendritic spine distribution of CTTN/cortactin in hippocampal neurons, and thus controls dendritic spinogenesis and dendritic spine maintenance. Associates with the striatin-interacting phosphatase and kinase (STRIPAK) core complex to regulate dendritic spine distribution of the STRIPAK complex in hippocampal neurons. The sequence is that of Cortactin-binding protein 2 from Homo sapiens (Human).